A 385-amino-acid polypeptide reads, in one-letter code: Trans-enoyl reductase tasC (385 aa).

Residue 49–52 coordinates NADP(+); sequence VDTK. A substrate-binding site is contributed by 136-143; the sequence is NSWYTVAW. Residues 196 to 199, 219 to 222, and 284 to 285 contribute to the NADP(+) site; these read SSST, SARN, and LD. Residue 305–309 coordinates substrate; that stretch reads GPELM. 374 to 375 contacts NADP(+); that stretch reads VS.

It belongs to the zinc-containing alcohol dehydrogenase family. Monomer.

The enzyme catalyses (2S,4S)-4-hydroxy-4-methylglutamate + 8 malonyl-CoA + 3 S-adenosyl-L-methionine + ATP + 8 NADPH + 11 H(+) = (2S)-3-[(2S)-3,5-dioxo-4-[(2E,4R,6R,8E,10E,12E)-4,6,12-trimethyltetradeca-2,8,10,12-tetraenoyl]pyrrolidin-2-yl]-2-hydroxy-2-methylpropanoate + AMP + 3 S-adenosyl-L-homocysteine + 8 CO2 + diphosphate + 8 NADP(+) + 8 CoA + 6 H2O. It carries out the reaction (2S,4R)-4-hydroxy-4-methylglutamate + 8 malonyl-CoA + 3 S-adenosyl-L-methionine + ATP + 8 NADPH + 11 H(+) = (2R)-3-[(2S)-3,5-dioxo-4-[(2E,4R,6R,8E,10E,12E)-4,6,12-trimethyltetradeca-2,8,10,12-tetraenoyl]pyrrolidin-2-yl]-2-hydroxy-2-methylpropanoate + AMP + 3 S-adenosyl-L-homocysteine + 8 CO2 + diphosphate + 8 NADP(+) + 8 CoA + 6 H2O. It functions in the pathway secondary metabolite biosynthesis. Its function is as follows. Trans-enoyl reductase; part of the gene cluster that mediates the biosynthesis of the tetramic acids Sch210971 and Sch210972, potential anti-HIV fungal natural product that contain a decalin core. The PKS module of tasS together with the enoylreductase tasC catalyze the formation of the polyketide unit which is then conjugated to 4-hydroxyl-4-methyl glutamate (HMG) by the condensation domain of the tasS NRPS module. One unique structural feature of Sch210971 and Sch210972 is the tetramic acid motif proposed to be derived from the non-proteinogenic amino acid HMG, by a Dieckmann-type condensation catalyzed by the reductase domain of tasS. The aldolase tasA catalyzes the aldol condensation of 2 molecules of pyruvic acid to yield the intermediate 4-hydroxyl-4-methyl-2-oxoglutarate (HMOG), which can then be stereoselectively transaminated, may be by tasG, to form HMG. The Diels-Alderase tas3 then uses the Dieckmann product of tasS as substrate and catalyzes the Diels-Alder cycloaddition to form the decalin ring of Sch210971 and Sch210972. The chain is Trans-enoyl reductase tasC from Hapsidospora irregularis.